We begin with the raw amino-acid sequence, 304 residues long: GTPase Era (304 aa).

The region spanning 11-179 (YCGFIAIVGR…QKIVRKSLRE (169 aa)) is the Era-type G domain. The tract at residues 19–26 (GRPNVGKS) is G1. 19 to 26 (GRPNVGKS) contacts GTP. The segment at 45-49 (QTTRH) is G2. The G3 stretch occupies residues 66–69 (DTPG). Residues 66–70 (DTPGL) and 128–131 (NKVD) contribute to the GTP site. The G4 stretch occupies residues 128-131 (NKVD). The tract at residues 158-160 (ISA) is G5. The region spanning 210 to 287 (TGEELPYSVT…HLELWVKVKA (78 aa)) is the KH type-2 domain.

It belongs to the TRAFAC class TrmE-Era-EngA-EngB-Septin-like GTPase superfamily. Era GTPase family. As to quaternary structure, monomer.

The protein resides in the cytoplasm. Its subcellular location is the cell inner membrane. In terms of biological role, an essential GTPase that binds both GDP and GTP, with rapid nucleotide exchange. Plays a role in 16S rRNA processing and 30S ribosomal subunit biogenesis and possibly also in cell cycle regulation and energy metabolism. In Haemophilus ducreyi (strain 35000HP / ATCC 700724), this protein is GTPase Era.